Here is a 61-residue protein sequence, read N- to C-terminus: Large ribosomal subunit protein bL32 (61 aa).

Over residues 1-19 (MAHPKRRQSKTRTAKRRTH) the composition is skewed to basic residues. The interval 1 to 20 (MAHPKRRQSKTRTAKRRTHD) is disordered.

Belongs to the bacterial ribosomal protein bL32 family.

In Bacteroides fragilis (strain YCH46), this protein is Large ribosomal subunit protein bL32.